The primary structure comprises 1097 residues: DNA-directed RNA polymerase subunit beta (1097 aa).

Residues 1072–1097 are disordered; it reads QDINPRRNTPSRPTYESLGTSEYEED. The span at 1077–1091 shows a compositional bias: polar residues; the sequence is RRNTPSRPTYESLGT.

It belongs to the RNA polymerase beta chain family. As to quaternary structure, in cyanobacteria the RNAP catalytic core is composed of 2 alpha, 1 beta, 1 beta', 1 gamma and 1 omega subunit. When a sigma factor is associated with the core the holoenzyme is formed, which can initiate transcription.

The enzyme catalyses RNA(n) + a ribonucleoside 5'-triphosphate = RNA(n+1) + diphosphate. Functionally, DNA-dependent RNA polymerase catalyzes the transcription of DNA into RNA using the four ribonucleoside triphosphates as substrates. The polypeptide is DNA-directed RNA polymerase subunit beta (Prochlorococcus marinus (strain AS9601)).